The following is a 398-amino-acid chain: L-methionine gamma-lyase (398 aa).

Pyridoxal 5'-phosphate is bound by residues 59–61 (YSR) and 89–90 (GM). Residue Tyr114 coordinates substrate. 208 to 210 (SAT) is a binding site for pyridoxal 5'-phosphate. N6-(pyridoxal phosphate)lysine is present on Lys211. A substrate-binding site is contributed by Arg375.

The protein belongs to the trans-sulfuration enzymes family. L-methionine gamma-lyase subfamily. In terms of assembly, homotetramer; dimer of active dimers. The cofactor is pyridoxal 5'-phosphate.

The enzyme catalyses L-methionine + H2O = methanethiol + 2-oxobutanoate + NH4(+). It carries out the reaction L-homocysteine + H2O = 2-oxobutanoate + hydrogen sulfide + NH4(+) + H(+). Its activity is regulated as follows. Irreversibly inactivated by DL-propargylglycine. Functionally, catalyzes the alpha,gamma-elimination of L-methionine to produce methanethiol, 2-oxobutanoate and ammonia. Is involved in L-methionine catabolism. In fact, shows a multicatalytic function since it also catalyzes gamma-replacement of L-methionine with thiol compounds, alpha,gamma-elimination and gamma-replacement reactions of L-homocysteine and its S-substituted derivatives, O-substituted-L-homoserines and DL-selenomethionine, and, to a lesser extent, alpha,beta-elimination and beta-replacement reactions of L-cysteine, S-methyl-L-cysteine, and O-acetyl-L-serine. Also catalyzes deamination and gamma-addition reactions of L-vinylglycine. Thus, the enzyme is able to cleave C-S, C-Se, and C-O bonds of sulfur, selenium, and oxygen amino acids, respectively. This is L-methionine gamma-lyase from Pseudomonas putida (Arthrobacter siderocapsulatus).